A 201-amino-acid chain; its full sequence is MELMFQDTNEIYNISESIFNKVFNEPLVHQIIVCYLARRRQGSKAQKSRSEVSGSGKKPWRQKGTGRARSGSLRSPIWRSGGVTFAAKPKKYKLKMNKKMYRYAIKSILSELIRQNRFFLFKEFIIEFPKTKILLKKLELINLKSVLIITAHKNTSLLYASRNLYHVCVINVKSINPVILISYEKVLITLSAIKKIEVMFK.

A disordered region spans residues Ala45–Ser75.

It belongs to the universal ribosomal protein uL4 family. Part of the 50S ribosomal subunit.

Its function is as follows. One of the primary rRNA binding proteins, this protein initially binds near the 5'-end of the 23S rRNA. It is important during the early stages of 50S assembly. It makes multiple contacts with different domains of the 23S rRNA in the assembled 50S subunit and ribosome. Forms part of the polypeptide exit tunnel. This chain is Large ribosomal subunit protein uL4, found in Buchnera aphidicola subsp. Cinara cedri (strain Cc).